The sequence spans 7260 residues: Nonribosomal peptide synthetase ecdA (7260 aa).

In terms of domain architecture, Carrier 1 spans 4–80; sequence TNEMERKRVF…ELFETIQYLQ (77 aa). Position 41 is an O-(pantetheine 4'-phosphoryl)serine (S41). The interval 134 to 549 is condensation 1; sequence EDVYPSTPLQ…SINEILTLPA (416 aa). The segment at 575–965 is adenylation 1; sequence QDQVRSQPAA…DGSLLYVGRC (391 aa). The region spanning 1090-1166 is the Carrier 2 domain; it reads APSTAIEHKL…DLARELEGRN (77 aa). S1127 carries the post-translational modification O-(pantetheine 4'-phosphoryl)serine. The interval 1208–1628 is condensation 2; that stretch reads EDIIPCTAMQ…LGDLSLLSAD (421 aa). An adenylation 2 region spans residues 1653–2054; sequence EEQITARPDS…GRRDTQIKIR (402 aa). A Carrier 3 domain is found at 2188–2264; it reads TPSTPTESQL…DLANLLSSRF (77 aa). S2225 carries the post-translational modification O-(pantetheine 4'-phosphoryl)serine. A condensation 3 region spans residues 2314–2719; the sequence is QDVYPCTPLQ…THVVQQLCDP (406 aa). The segment at 2763–3156 is adenylation 3; it reads KQALAQPNAP…GRRDTQVKIR (394 aa). The 79-residue stretch at 3287–3365 folds into the Carrier 4 domain; it reads QPATEMEKML…ELAQVLEERV (79 aa). The residue at position 3324 (S3324) is an O-(pantetheine 4'-phosphoryl)serine. Residues 3417 to 3831 form a condensation 4 region; the sequence is VQDVYPCTPL…LLSPNDQQQI (415 aa). Positions 3851–4248 are adenylation 4; the sequence is EEQAMAHPTK…SFVYVARRNT (398 aa). The Carrier 5 domain occupies 4394–4471; the sequence is APATAMERTL…DLANLLADGA (78 aa). S4431 carries the post-translational modification O-(pantetheine 4'-phosphoryl)serine. A condensation 5 region spans residues 4510-4910; that stretch reads EDIYPATPLQ…HFVHVAEQLF (401 aa). The adenylation 5 stretch occupies residues 4955-5357; the sequence is ERAALQPNAP…GRRDLQVKIR (403 aa). Residues 5496-5573 form the Carrier 6 domain; sequence APRTVMEQQV…DLALVLSERG (78 aa). Position 5533 is an O-(pantetheine 4'-phosphoryl)serine (S5533). A condensation 6 region spans residues 5622–6043; sequence EDVYPCTPLQ…AVSEKDERQI (422 aa). The adenylation 6 stretch occupies residues 6063–6460; sequence QEQVARTPGE…GRHDSQVKIR (398 aa). A Carrier 7 domain is found at 6592–6668; that stretch reads APSTAMERQL…EVAQVVEDRV (77 aa). Position 6629 is an O-(pantetheine 4'-phosphoryl)serine (S6629). The condensation 7 stretch occupies residues 6718-7133; sequence LPTTDFQALT…ILDSPGLLVS (416 aa). A disordered region spans residues 7241-7260; sequence CEEAEKSASVTSSERRLATI.

This sequence belongs to the NRP synthetase family.

Its pathway is antifungal biosynthesis. Its function is as follows. Nonribosomal peptide synthetase; part of the gene cluster that mediates the biosynthesis of echinocandin B, a fungal lipidated cyclic hexapeptide that acts as an antifungal agent. Linoleoyl-AMP, produced by the fatty-acyl-AMP ligase ecdI, is transferred to the initiation carrier domain (T0) of ecdA. The linoleoyl-S-phosphopantetheinyl-T0 is sequentially extended with L-ornithine, L-threonine, L-proline, L-homotyrosine, L-threonine, and 4R-methyl-L-proline to form the linear hexapeptide. Thereafter, the terminal condensation (C7) performs macrocyclization of the NRPS product and the cyclic scaffold is released from ecdA. All six of the amino acid residues are hydroxylated, including 4R,5R-dihydroxy-L-ornithine, 4R-hydroxyl-L-proline, 3S,4S-dihydroxy-L-homotyrosine, and 3S-hydroxyl-4S-methyl-L-prolin. In the pathway, all the hydroxylation reactions are proposed to occur following completion of the cyclic peptide, so the unhydroxylated precursor produced by ecdA will undergo six rounds of hydroxylation. Five hydroxylase genes (ecdG, ecdH, ecdK, htyE and htyF) are embedded within the echinocandin B (ecd) and L-homotyrosine (hty) clusters. The sequence is that of Nonribosomal peptide synthetase ecdA from Aspergillus rugulosus (Emericella rugulosa).